Reading from the N-terminus, the 336-residue chain is Nuclear envelope-associated protein 3 (336 aa).

Coiled coils occupy residues 14 to 87 (LKDL…IRAS) and 128 to 261 (VLSK…LKKK). The short motif at 240-261 (KTKELEDQVENQRRIDQELKKK) is the Bipartite nuclear localization signal element. A helical membrane pass occupies residues 313–330 (LWDKSGFKIVVSMSMLIL).

Forms homomers and heteromers with NEAP1 and NEAP2. Interacts with SUN1 and SUN2.

Its subcellular location is the nucleus inner membrane. The protein localises to the nucleus. It is found in the nucleoplasm. The chain is Nuclear envelope-associated protein 3 from Arabidopsis thaliana (Mouse-ear cress).